A 131-amino-acid polypeptide reads, in one-letter code: Lysosomal enzyme trafficking factor (131 aa).

The next 2 helical transmembrane spans lie at 8–28 and 66–86; these read MGWIGVSLYLFVSAAAFYYVF and LPFWLWAALFLIPYFQVFLFL.

It belongs to the LYSET family.

The protein resides in the golgi apparatus membrane. Functionally, required for mannose-6-phosphate-dependent trafficking of lysosomal enzymes. LYSET bridges GlcNAc-1-phosphate transferase (GNPTAB), to the membrane-bound transcription factor site-1 protease (MBTPS1), thus allowing proteolytic activation of the GNPTAB. GNPTAB is involved in the regulation of M6P-dependent Golgi-to-lysosome trafficking of lysosomal enzymes. LYSET is thus an essential factor for maturation and delivery of lysosomal hydrolases. In Xenopus laevis (African clawed frog), this protein is Lysosomal enzyme trafficking factor (lyset-b).